We begin with the raw amino-acid sequence, 1345 residues long: MKKPYSIGLDIGTNSVGWAVVTDDYKVPAKKMKVLGNTDKSHIEKNLLGALLFDSGNTAEDRRLKRTARRRYTRRRNRILYLQEIFSEEMGKVDDSFFHRLEDSFLVTEDKRGERHPIFGNLEEEVKYHENFPTIYHLRQYLADNPEKVDLRLVYLALAHIIKFRGHFLIEGKFDTRNNDVQRLFQEFLAVYDNTFENSSLQEQNVQVEEILTDKISKSAKKDRVLKLFPNEKSNGRFAEFLKLIVGNQADFKKHFELEEKAPLQFSKDTYEEELEVLLAQIGDNYAELFLSAKKLYDSILLSGILTVTDVGTKAPLSASMIQRYNEHQMDLAQLKQFIRQKLSDKYNEVFSDVSKDGYAGYIDGKTNQEAFYKYLKGLLNKIEGSGYFLDKIEREDFLRKQRTFDNGSIPHQIHLQEMRAIIRRQAEFYPFLADNQDRIEKLLTFRIPYYVGPLARGKSDFAWLSRKSADKITPWNFDEIVDKESSAEAFINRMTNYDLYLPNQKVLPKHSLLYEKFTVYNELTKVKYKTEQGKTAFFDANMKQEIFDGVFKVYRKVTKDKLMDFLEKEFDEFRIVDLTGLDKENKVFNASYGTYHDLCKILDKDFLDNSKNEKILEDIVLTLTLFEDREMIRKRLENYSDLLTKEQVKKLERRHYTGWGRLSAELIHGIRNKESRKTILDYLIDDGNSNRNFMQLINDDALSFKEEIAKAQVIGETDNLNQVVSDIAGSPAIKKGILQSLKIVDELVKIMGHQPENIVVEMARENQFTNQGRRNSQQRLKGLTDSIKEFGSQILKEHPVENSQLQNDRLFLYYLQNGRDMYTGEELDIDYLSQYDIDHIIPQAFIKDNSIDNRVLTSSKENRGKSDDVPSKDVVRKMKSYWSKLLSAKLITQRKFDNLTKAERGGLTDDDKAGFIKRQLVETRQITKHVARILDERFNTETDENNKKIRQVKIVTLKSNLVSNFRKEFELYKVREINDYHHAHDAYLNAVIGKALLGVYPQLEPEFVYGDYPHFHGHKENKATAKKFFYSNIMNFFKKDDVRTDKNGEIIWKKDEHISNIKKVLSYPQVNIVKKVEEQTGGFSKESILPKGNSDKLIPRKTKKFYWDTKKYGGFDSPIVAYSILVIADIEKGKSKKLKTVKALVGVTIMEKMTFERDPVAFLERKGYRNVQEENIIKLPKYSLFKLENGRKRLLASARELQKGNEIVLPNHLGTLLYHAKNIHKVDEPKHLDYVDKHKDEFKELLDVVSNFSKKYTLAEGNLEKIKELYAQNNGEDLKELASSFINLLTFTAIGAPATFKFFDKNIDRKRYTSTTEILNATLIHQSITGLYETRIDLNKLGGD.

Asp10 serves as the catalytic For RuvC-like nuclease domain. Residues Asp10, Glu762, and Glu766 each coordinate Mg(2+). In terms of domain architecture, HNH Cas9-type spans 770-921 (TNQGRRNSQQ…DKAGFIKRQL (152 aa)). The active-site Proton acceptor for HNH nuclease domain is the His840. His983 contributes to the Mg(2+) binding site.

The protein belongs to the CRISPR-associated protein Cas9 family. Subtype II-A subfamily. As to quaternary structure, monomer. Binds crRNA and tracrRNA. The cofactor is Mg(2+).

CRISPR (clustered regularly interspaced short palindromic repeat) is an adaptive immune system that provides protection against mobile genetic elements (viruses, transposable elements and conjugative plasmids). CRISPR clusters contain spacers, sequences complementary to antecedent mobile elements, and target invading nucleic acids. CRISPR clusters are transcribed and processed into CRISPR RNA (crRNA). In type II CRISPR systems correct processing of pre-crRNA requires a trans-encoded small RNA (tracrRNA), endogenous ribonuclease 3 (rnc) and this protein. The tracrRNA serves as a guide for ribonuclease 3-aided processing of pre-crRNA. Subsequently Cas9/crRNA/tracrRNA endonucleolytically cleaves linear or circular dsDNA target complementary to the spacer; Cas9 is inactive in the absence of the 2 guide RNAs (gRNA). Cas9 recognizes the protospacer adjacent motif (PAM) in the CRISPR repeat sequences to help distinguish self versus nonself, as targets within the bacterial CRISPR locus do not have PAMs. PAM recognition is also required for catalytic activity. Complements the gRNA coprocessing defect in a cas9 deletion in S.pyogenes strain 370 and cuts target plasmid in Cas9:gRNAs mixing experiments with S.thermophilus CRISPR3 from strain LMD-9. This is CRISPR-associated endonuclease Cas9 from Streptococcus mutans serotype c (strain ATCC 700610 / UA159).